We begin with the raw amino-acid sequence, 476 residues long: Arginine biosynthesis bifunctional protein ArgJ, mitochondrial (476 aa).

Residues Thr-193, Lys-219, Thr-237, Glu-337, Asn-471, and Ser-476 each contribute to the substrate site. The active-site Nucleophile is the Thr-237.

This sequence belongs to the ArgJ family. As to quaternary structure, heterodimer of an alpha and a beta chain. The alpha and beta chains are autoproteolytically processed from a single precursor protein within the mitochondrion.

It is found in the mitochondrion matrix. The catalysed reaction is N(2)-acetyl-L-ornithine + L-glutamate = N-acetyl-L-glutamate + L-ornithine. The enzyme catalyses L-glutamate + acetyl-CoA = N-acetyl-L-glutamate + CoA + H(+). It participates in amino-acid biosynthesis; L-arginine biosynthesis; L-ornithine and N-acetyl-L-glutamate from L-glutamate and N(2)-acetyl-L-ornithine (cyclic): step 1/1. Its pathway is amino-acid biosynthesis; L-arginine biosynthesis; N(2)-acetyl-L-ornithine from L-glutamate: step 1/4. Its function is as follows. Catalyzes two activities which are involved in the cyclic version of arginine biosynthesis: the synthesis of acetylglutamate from glutamate and acetyl-CoA, and of ornithine by transacetylation between acetylornithine and glutamate. The chain is Arginine biosynthesis bifunctional protein ArgJ, mitochondrial from Cryptococcus neoformans var. neoformans serotype D (strain B-3501A) (Filobasidiella neoformans).